Reading from the N-terminus, the 66-residue chain is DNA gyrase inhibitor YacG (66 aa).

Zn(2+) is bound by residues Cys-9, Cys-12, Cys-28, and Cys-32.

The protein belongs to the DNA gyrase inhibitor YacG family. In terms of assembly, interacts with GyrB. Zn(2+) is required as a cofactor.

In terms of biological role, inhibits all the catalytic activities of DNA gyrase by preventing its interaction with DNA. Acts by binding directly to the C-terminal domain of GyrB, which probably disrupts DNA binding by the gyrase. The sequence is that of DNA gyrase inhibitor YacG from Pseudomonas fluorescens (strain SBW25).